We begin with the raw amino-acid sequence, 544 residues long: Cytochrome P450 monooxygenase cle2 (544 aa).

The helical transmembrane segment at 19–39 threads the bilayer; that stretch reads LGLLIGLSLILSITWTAYTIL. The tract at residues 273-305 is disordered; it reads RTQQVEQSIEKNTKNEKKEDEDEDQNEDEETPG. Residues 280-290 show a composition bias toward basic and acidic residues; sequence SIEKNTKNEKK. Acidic residues predominate over residues 291–304; sequence EDEDEDQNEDEETP. A heme-binding site is contributed by cysteine 478.

The protein belongs to the cytochrome P450 family. Heme is required as a cofactor.

The protein localises to the membrane. It participates in secondary metabolite biosynthesis; terpenoid biosynthesis. Functionally, cytochrome P450 monooxygenase; part of the cluster A that mediates the biosynthesis of chevalone E and its oxidized derivatives that possess a unique five-membered lactone ring and can synergistically enhance the cytotoxicity of doxorubicin (DOX) in breast cancer cells. Within the pathway, cle2 is involved in hydroxylation of the chavalone E scaffold at position C-20 and contributes with cle4 to the production of seven oxidation derivatives. The molecular scaffold is commonly biosynthesized by a series of enzymes including the non-reducing polyketide synthase (NR-PKS) cle1 that produces the alpha-pyrone triacetic acid lactone (TAL); The membrane-bound prenyltransferase cle5 that accepts TAL as its substrate to perform a C-3 geranylgeranylation reaction, in which the pathway-dedicated GGPS cle6 is required to provide GGPP, the other substrate of cle5; the FAD-dependent monooxygenase Cle3 that forms an (S)-epoxide ring at the terminal olefin of the geranylgeranyl group; and the terpene cyclase Cle7 that catalyzes the cyclization of the prenyl group that yields the pentacyclic pathway intermediate chevalone E. Chevalone E can derivatize into seven new oxidized analogs by the cytochrome P450 monooxygenases cle2 (acting at C-20) and cle4 (acting at C-11 and C-12). The protein is Cytochrome P450 monooxygenase cle2 of Aspergillus versicolor.